The following is a 179-amino-acid chain: Small ribosomal subunit protein uS5 (179 aa).

One can recognise an S5 DRBM domain in the interval 22–85 (MIEKLVAVNR…EYARKRMANV (64 aa)).

Belongs to the universal ribosomal protein uS5 family. As to quaternary structure, part of the 30S ribosomal subunit. Contacts proteins S4 and S8.

With S4 and S12 plays an important role in translational accuracy. In terms of biological role, located at the back of the 30S subunit body where it stabilizes the conformation of the head with respect to the body. The polypeptide is Small ribosomal subunit protein uS5 (Xylella fastidiosa (strain M12)).